Here is a 174-residue protein sequence, read N- to C-terminus: RNA pyrophosphohydrolase (174 aa).

A Nudix hydrolase domain is found at 6-149 (GYRPNVGIIL…KRDVYLGALK (144 aa)). Residues 38-59 (GGIKPGESPETAMYRELYEEVG) carry the Nudix box motif.

It belongs to the Nudix hydrolase family. RppH subfamily. The cofactor is a divalent metal cation.

In terms of biological role, accelerates the degradation of transcripts by removing pyrophosphate from the 5'-end of triphosphorylated RNA, leading to a more labile monophosphorylated state that can stimulate subsequent ribonuclease cleavage. This is RNA pyrophosphohydrolase from Neisseria meningitidis serogroup C / serotype 2a (strain ATCC 700532 / DSM 15464 / FAM18).